We begin with the raw amino-acid sequence, 587 residues long: Serine/threonine-protein phosphatase 2A 65 kDa regulatory subunit A beta isoform (587 aa).

Serine 2 is modified (N-acetylserine). 14 HEAT repeats span residues 2–42, 44–80, 81–119, 158–196, 197–235, 236–274, 275–313, 315–352, 353–391, 393–430, 432–469, 470–508, 509–547, and 549–586; these read SMID…ALGE, RTRK…YVGG, VEYA…QMRE, DMLK…TVES, AHLK…LLEP, QDCV…AVGP, EPTR…ILNP, IAIQ…VLGK, DATI…VIGI, LLSQ…QLGV, FFDD…EFGP, EWAM…VMGS, EITC…IVDQ, and VVEK…VMMS.

It belongs to the phosphatase 2A regulatory subunit A family. In terms of assembly, PP2A consists of a common heterodimeric core enzyme, composed of a 36 kDa catalytic subunit (subunit C) and a 65 kDa constant regulatory subunit (subunit A), that associates with a variety of regulatory subunits such as subunits B (the R2/B/PR55/B55, R3/B''/PR72/PR130/PR59 and R5/B'/B56 families). Interacts with B'THETA. Interacts with SRK2E/OST1. Interacts with SIC/RON3. Ubiquitous, with higher levels in roots and flowers (at protein level).

The protein resides in the cytoplasm. Its subcellular location is the cytosol. It localises to the nucleus. It is found in the peroxisome. In terms of biological role, the A subunit of protein phosphatase 2A serves as a scaffolding molecule to coordinate the assembly of the catalytic subunit and a variable regulatory B subunit. Involved during developmental process such as seedling and floral developments. Seems to act as a negative regulator of PP2A catalytic activity. Associates with the serine/threonine-protein phosphatase PP2A catalytic subunit C and regulatory subunit B' to positively regulates beta-oxidation of fatty acids and protoauxins in peroxisomes by dephosphorylating peroxisomal beta-oxidation-related proteins. In Arabidopsis thaliana (Mouse-ear cress), this protein is Serine/threonine-protein phosphatase 2A 65 kDa regulatory subunit A beta isoform (PP2AA2).